The primary structure comprises 62 residues: Large ribosomal subunit protein bL32 (62 aa).

Basic residues predominate over residues 1 to 16 (MAVQKNRKTRSKRGMR). The tract at residues 1-62 (MAVQKNRKTR…VISQGDSDDE (62 aa)) is disordered. Positions 53-62 (VISQGDSDDE) are enriched in polar residues.

Belongs to the bacterial ribosomal protein bL32 family.

The polypeptide is Large ribosomal subunit protein bL32 (Alcanivorax borkumensis (strain ATCC 700651 / DSM 11573 / NCIMB 13689 / SK2)).